A 279-amino-acid polypeptide reads, in one-letter code: Type II iodothyronine deiodinase (279 aa).

The Lumenal portion of the chain corresponds to 1 to 7 (MGLLSAD). Residues 8–28 (LLITLQILPVFFSNCLFLALY) form a helical; Signal-anchor for type III membrane protein membrane-spanning segment. The Cytoplasmic segment spans residues 29-279 (DSVILLKHMV…TEDLSTDVSL (251 aa)). Residue Sec132 is part of the active site. Residues Sec132 and Sec265 are each a non-standard amino acid (selenocysteine).

Belongs to the iodothyronine deiodinase family. Predominantly monomer. Can form homodimers but homodimerization is not essential for enzyme activity. In terms of tissue distribution, highly expressed in liver and in various parts of the brain including telencephalon, hippocampus, cerebellum, and brain stem, and weakly expressed in thyroid, lung, and small intestine. Not detected in skeletal muscle, heart atria or ventricle, gizzard or kidney.

The protein resides in the endoplasmic reticulum membrane. It catalyses the reaction 3,3',5-triiodo-L-thyronine + iodide + A + H(+) = L-thyroxine + AH2. The catalysed reaction is 3,3'-diiodo-L-thyronine + iodide + A + H(+) = 3,3',5'-triiodo-L-thyronine + AH2. It carries out the reaction 3'-iodo-L-thyronine + iodide + A + H(+) = 3',5'-diiodo-L-thyronine + AH2. The enzyme catalyses 3,3'-diiodothyronamine + iodide + A + H(+) = 3,3',5'-triiodothyronamine + AH2. It catalyses the reaction 3'-iodothyronamine + iodide + A + H(+) = 3',5'-diiodothyronamine + AH2. Its activity is regulated as follows. Not inhibited by N(6)-propylthiouracil. In terms of biological role, plays a crucial role in the metabolism of thyroid hormones (TH) and has specific roles in TH activation and inactivation by deiodination. Catalyzes the deiodination of L-thyroxine (T4) to 3,5,3'-triiodothyronine (T3) and 3,3',5'-triiodothyronine (rT3) to 3,3'-diiodothyronine (3,3'-T2) via outer-ring deiodination (ORD). Catalyzes the deiodination of 3',5'-diiodothyronine (3',5'-T2) to 3'-monoiodothyronine (3'-T1) via ORD. Catalyzes the phenolic ring deiodinations of 3,3',5'-triiodothyronamine and 3',5'- diiodothyronamine. This Gallus gallus (Chicken) protein is Type II iodothyronine deiodinase (DIO2).